Consider the following 482-residue polypeptide: Adenylyltransferase and sulfurtransferase MOCS3-2 (482 aa).

ATP is bound by residues Gly-125, Asp-146, 153–157, Lys-170, and 214–215; these read NNLHR and DN. Cys-255 and Cys-258 together coordinate Zn(2+). The active-site Glycyl thioester intermediate; for adenylyltransferase activity is the Cys-272. Cys-330 and Cys-333 together coordinate Zn(2+). The 96-residue stretch at 385–480 folds into the Rhodanese domain; it reads DGEPHLLLDV…WGQDVDPDFP (96 aa). The active-site Cysteine persulfide intermediate; for sulfurtransferase activity is the Cys-440.

The protein in the N-terminal section; belongs to the HesA/MoeB/ThiF family. UBA4 subfamily. The cofactor is Zn(2+).

The protein localises to the cytoplasm. The enzyme catalyses [molybdopterin-synthase sulfur-carrier protein]-C-terminal Gly-Gly + ATP + H(+) = [molybdopterin-synthase sulfur-carrier protein]-C-terminal Gly-Gly-AMP + diphosphate. It carries out the reaction [molybdopterin-synthase sulfur-carrier protein]-C-terminal Gly-Gly-AMP + S-sulfanyl-L-cysteinyl-[cysteine desulfurase] + AH2 = [molybdopterin-synthase sulfur-carrier protein]-C-terminal-Gly-aminoethanethioate + L-cysteinyl-[cysteine desulfurase] + A + AMP + 2 H(+). It participates in tRNA modification; 5-methoxycarbonylmethyl-2-thiouridine-tRNA biosynthesis. It functions in the pathway cofactor biosynthesis; molybdopterin biosynthesis. Functionally, plays a central role in 2-thiolation of mcm(5)S(2)U at tRNA wobble positions of cytosolic tRNA(Lys), tRNA(Glu) and tRNA(Gln). Also essential during biosynthesis of the molybdenum cofactor. Acts by mediating the C-terminal thiocarboxylation of sulfur carriers URM1 and MOCS2A. Its N-terminus first activates URM1 and MOCS2A as acyl-adenylates (-COAMP), then the persulfide sulfur on the catalytic cysteine is transferred to URM1 and MOCS2A to form thiocarboxylation (-COSH) of their C-terminus. The reaction probably involves hydrogen sulfide that is generated from the persulfide intermediate and that acts as a nucleophile towards URM1 and MOCS2A. Subsequently, a transient disulfide bond is formed. Does not use thiosulfate as sulfur donor; NFS1 probably acting as a sulfur donor for thiocarboxylation reactions. The sequence is that of Adenylyltransferase and sulfurtransferase MOCS3-2 from Zea mays (Maize).